Consider the following 634-residue polypeptide: AAl-toxin cluster-specific transcription factor ALT13 (634 aa).

The segment at residues 30-56 (CENCKRRKVRCSGANPCEQCLKVNVHC) is a DNA-binding region (zn(2)-C6 fungal-type). The interval 66–89 (RRSVPNSGADKNNQQGDTDRHNGA) is disordered. Over residues 69–81 (VPNSGADKNNQQG) the composition is skewed to polar residues.

Its subcellular location is the nucleus. In terms of biological role, transcription factor that regulates the expression of the gene cluster that mediates the biosynthesis of AAL-toxins, sphinganine-analog mycotoxins responsible for Alternaria stem canker on tomato by the tomato pathotype. In Alternaria alternata (Alternaria rot fungus), this protein is AAl-toxin cluster-specific transcription factor ALT13.